Reading from the N-terminus, the 88-residue chain is Cell division topological specificity factor (88 aa).

The protein belongs to the MinE family.

Functionally, prevents the cell division inhibition by proteins MinC and MinD at internal division sites while permitting inhibition at polar sites. This ensures cell division at the proper site by restricting the formation of a division septum at the midpoint of the long axis of the cell. This is Cell division topological specificity factor from Salmonella agona (strain SL483).